A 351-amino-acid polypeptide reads, in one-letter code: Biotin synthase (351 aa).

In terms of domain architecture, Radical SAM core spans 42 to 269 (NEVQVSTLLS…KSHVRLSAGR (228 aa)). Positions 57, 61, and 64 each coordinate [4Fe-4S] cluster. Residues C101, C132, C192, and R264 each coordinate [2Fe-2S] cluster.

The protein belongs to the radical SAM superfamily. Biotin synthase family. As to quaternary structure, homodimer. The cofactor is [4Fe-4S] cluster. It depends on [2Fe-2S] cluster as a cofactor.

It catalyses the reaction (4R,5S)-dethiobiotin + (sulfur carrier)-SH + 2 reduced [2Fe-2S]-[ferredoxin] + 2 S-adenosyl-L-methionine = (sulfur carrier)-H + biotin + 2 5'-deoxyadenosine + 2 L-methionine + 2 oxidized [2Fe-2S]-[ferredoxin]. It functions in the pathway cofactor biosynthesis; biotin biosynthesis; biotin from 7,8-diaminononanoate: step 2/2. Catalyzes the conversion of dethiobiotin (DTB) to biotin by the insertion of a sulfur atom into dethiobiotin via a radical-based mechanism. This chain is Biotin synthase, found in Psychromonas ingrahamii (strain DSM 17664 / CCUG 51855 / 37).